Reading from the N-terminus, the 465-residue chain is Calcitonin gene-related peptide type 1 receptor (465 aa).

A signal peptide spans Met1–Ala17. Residues Ser18–Met141 lie on the Extracellular side of the membrane. N-linked (GlcNAc...) asparagine glycans are attached at residues Asn22, Asn68, Asn120, and Asn125. 3 disulfide bridges follow: Cys50/Cys76, Cys67/Cys107, and Cys90/Cys129. A helical membrane pass occupies residues Asn142–Phe166. The Cytoplasmic segment spans residues Tyr167–Thr177. A helical transmembrane segment spans residues Leu178–Val200. At Ala201 to Pro211 the chain is on the extracellular side. A helical transmembrane segment spans residues Thr212–His240. The Cytoplasmic segment spans residues Thr241–Leu254. The helical transmembrane segment at Met255–Ala275 threads the bilayer. The Extracellular segment spans residues Arg276–Ser291. N-linked (GlcNAc...) asparagine glycosylation occurs at Asn289. A helical transmembrane segment spans residues Leu292–Arg316. The Cytoplasmic segment spans residues Val317–Ser331. Residues Leu332 to Leu353 form a helical membrane-spanning segment. Over Leu354–Asp368 the chain is Extracellular. Residues Tyr369–Phe389 traverse the membrane as a helical segment. Residues Asn390 to Thr465 lie on the Cytoplasmic side of the membrane.

Belongs to the G-protein coupled receptor 2 family.

The protein localises to the cell membrane. Functionally, may function as G protein-coupled receptor for calcitonin-gene-related peptides and adrenomedullin. Specificity may be modulated by accessory proteins. May activate cAMP-dependent pathway. The chain is Calcitonin gene-related peptide type 1 receptor (calcrl) from Oncorhynchus gorbuscha (Pink salmon).